We begin with the raw amino-acid sequence, 20 residues long: Truncated non-structural protein of 4.9 kDa (20 aa).

This sequence belongs to the coronaviruses ns4.9 protein family.

The polypeptide is Truncated non-structural protein of 4.9 kDa (Sus scrofa (Pig)).